The primary structure comprises 566 residues: Arginine--tRNA ligase (566 aa).

Residues 123–133 carry the 'HIGH' region motif; that stretch reads PNVAKPFHVGH.

This sequence belongs to the class-I aminoacyl-tRNA synthetase family. As to quaternary structure, monomer.

It localises to the cytoplasm. It catalyses the reaction tRNA(Arg) + L-arginine + ATP = L-arginyl-tRNA(Arg) + AMP + diphosphate. This Alkaliphilus metalliredigens (strain QYMF) protein is Arginine--tRNA ligase.